A 331-amino-acid polypeptide reads, in one-letter code: Probable mannose-1-phosphate guanylyltransferase 3 (331 aa).

Position 3 (Lys-3) interacts with diphosphate. 5 residues coordinate GDP-alpha-D-mannose: Gly-66, Asn-90, Asp-92, Gly-127, and Asn-154.

It belongs to the transferase hexapeptide repeat family.

The enzyme catalyses alpha-D-mannose 1-phosphate + GTP + H(+) = GDP-alpha-D-mannose + diphosphate. It functions in the pathway nucleotide-sugar biosynthesis; GDP-alpha-D-mannose biosynthesis; GDP-alpha-D-mannose from alpha-D-mannose 1-phosphate (GTP route): step 1/1. Its function is as follows. Catalyzes a reaction of the Smirnoff-Wheeler pathway, the major route to ascorbate biosynthesis in plants. This Arabidopsis thaliana (Mouse-ear cress) protein is Probable mannose-1-phosphate guanylyltransferase 3.